Consider the following 331-residue polypeptide: Protein mono-ADP-ribosyltransferase PARP11 (331 aa).

Position 11 is an N6-(ADP-ribosyl)lysine (Lys11). Residues 15-99 (SDVDDMDTSD…VTGKQRLIKR (85 aa)) enclose the WWE domain. Residues Cys49 and Cys65 each carry the ADP-ribosylcysteine modification. An ADP-ribosyl aspartic acid modification is found at Asp80. Residues 116–331 (IPMPTHWENV…IYPEYLIDFH (216 aa)) form the PARP catalytic domain.

This sequence belongs to the ARTD/PARP family. Auto-mono-ADP-ribosylated. As to expression, predominantly expressed in testis, preferentially in postmeiotic germ cells. Also detectable in other tissues, including liver, lung, spleen, thymus and brain.

It is found in the nucleus. Its subcellular location is the nuclear pore complex. The enzyme catalyses L-aspartyl-[protein] + NAD(+) = 4-O-(ADP-D-ribosyl)-L-aspartyl-[protein] + nicotinamide. The catalysed reaction is L-cysteinyl-[protein] + NAD(+) = S-(ADP-D-ribosyl)-L-cysteinyl-[protein] + nicotinamide + H(+). It carries out the reaction L-glutamyl-[protein] + NAD(+) = 5-O-(ADP-D-ribosyl)-L-glutamyl-[protein] + nicotinamide. It catalyses the reaction L-lysyl-[protein] + NAD(+) = N(6)-(ADP-D-ribosyl)-L-lysyl-[protein] + nicotinamide + H(+). Functionally, mono-ADP-ribosyltransferase that mediates mono-ADP-ribosylation of target proteins. Plays a role in nuclear envelope stability and nuclear remodeling during spermiogenesis. Inhibits the type I interferon activated signaling pathway. Mechanistically, mono-ADP-ribosylates beta-TrCP/BTRC to promote IFNAR1 ubiquitination and protect BTRC from ubiquitin-proteasome degradation. The polypeptide is Protein mono-ADP-ribosyltransferase PARP11 (Mus musculus (Mouse)).